A 229-amino-acid chain; its full sequence is HTH-type transcriptional regulator HbdR (229 aa).

One can recognise an HTH tetR-type domain in the interval 20-80; it reads EERRHQIISA…LTLKNVLDTY (61 aa). A DNA-binding region (H-T-H motif) is located at residues 43 to 62; sequence TILQIAREAKVSTGLIYQYF.

As to quaternary structure, homodimer in solution.

Activity is regulated by the effector molecules 3-hydroxybenzoyl-CoA and benzoyl-CoA, which bind to HbdR, alleviating its repression on the three target promoters and inducing the expression of the hbd genes. Its function is as follows. Transcriptional regulator that controls the expression of the hbd cluster, which contains three catabolic operons and is responsible for the anaerobic degradation of 3-hydroxybenzoate. HbdR suppresses the activity of the three catabolic promoters (PhbdN, PhbdE and PhbdH) by binding to a conserved palindromic operator box. In addition, it slightly increases activity of its own promoter (PhbdR). The HbdR-mediated repression of hbd genes may play a crucial biological role in maintaining requisite hydroxybenzoate levels in the cell. In Aromatoleum sp. (strain CIB) (Azoarcus sp. (strain CIB)), this protein is HTH-type transcriptional regulator HbdR.